The primary structure comprises 260 residues: Putative ABC transporter substrate-binding lipoprotein YvgL (260 aa).

The N-terminal stretch at 1-20 (MFKKYSIFIAALTAFLLVAG) is a signal peptide. C21 carries N-palmitoyl cysteine lipidation. A lipid anchor (S-diacylglycerol cysteine) is attached at C21. Residues S43, S71, A151, V178, and Y196 each coordinate molybdate.

Belongs to the bacterial solute-binding protein ModA family.

It localises to the cell membrane. This chain is Putative ABC transporter substrate-binding lipoprotein YvgL (yvgL), found in Bacillus subtilis (strain 168).